We begin with the raw amino-acid sequence, 157 residues long: Ubiquitin-like protein 4A (157 aa).

The region spanning 1-76 (MQLTVKALQG…LNLVVKPLEK (76 aa)) is the Ubiquitin-like domain. A Glycyl lysine isopeptide (Lys-Gly) (interchain with G-Cter in ubiquitin) cross-link involves residue Lys-48. Phosphoserine is present on Ser-90. The interval 96–138 (WHLISKVLARHFSAADASRVLEQLQRDYERSLSRLTLDDIERL) is required and sufficient for interaction with BAG6.

As to quaternary structure, component of the BAG6/BAT3 complex, at least composed of BAG6, UBL4A and GET4/TRC35. Interacts with BAG6; the interaction is direct and required for UBL4A protein stability. Interacts with USP13; may be indirect via BAG6. Polyubiquitinated. Ubiquitination by AMFR and deubiquitination by USP13 may regulate the interaction between the BAG6/BAT3 complex and SGTA and therefore may regulate client proteins fate.

It localises to the cytoplasm. The protein localises to the cytosol. It is found in the nucleus. Functionally, as part of a cytosolic protein quality control complex, the BAG6/BAT3 complex, maintains misfolded and hydrophobic patches-containing proteins in a soluble state and participates in their proper delivery to the endoplasmic reticulum or alternatively can promote their sorting to the proteasome where they undergo degradation. The BAG6/BAT3 complex is involved in the post-translational delivery of tail-anchored/type II transmembrane proteins to the endoplasmic reticulum membrane. Recruited to ribosomes, it interacts with the transmembrane region of newly synthesized tail-anchored proteins and together with SGTA and ASNA1 mediates their delivery to the endoplasmic reticulum. Client proteins that cannot be properly delivered to the endoplasmic reticulum are ubiquitinated and sorted to the proteasome. Similarly, the BAG6/BAT3 complex also functions as a sorting platform for proteins of the secretory pathway that are mislocalized to the cytosol either delivering them to the proteasome for degradation or to the endoplasmic reticulum. The BAG6/BAT3 complex also plays a role in the endoplasmic reticulum-associated degradation (ERAD), a quality control mechanism that eliminates unwanted proteins of the endoplasmic reticulum through their retrotranslocation to the cytosol and their targeting to the proteasome. It maintains these retrotranslocated proteins in an unfolded yet soluble state condition in the cytosol to ensure their proper delivery to the proteasome. In Oryctolagus cuniculus (Rabbit), this protein is Ubiquitin-like protein 4A (UBL4A).